The chain runs to 385 residues: Protein GOLM2 (385 aa).

The Cytoplasmic portion of the chain corresponds to 1–12 (MVGFGAPRRTGR). A helical; Signal-anchor for type II membrane protein transmembrane segment spans residues 13–33 (LPPFVLVALLAVIGLLAFNYW). Residues 34 to 385 (SVSARQAALH…YHKDHLNETL (352 aa)) lie on the Lumenal side of the membrane. Positions 44 to 193 (DELLGLQAQV…KEELDKQPQK (150 aa)) form a coiled coil. Residues 169-385 (LAERKREYEE…YHKDHLNETL (217 aa)) are disordered. 2 stretches are compositionally biased toward basic and acidic residues: residues 170–193 (AERK…QPQK) and 211–220 (EVKEKIEDPS). The segment covering 265–283 (LPSQSKSLLEKQPSLQPLS) has biased composition (polar residues). Positions 285-299 (TEHEVKKPLPDKKET) are enriched in basic and acidic residues. The span at 356-367 (NGDDGNVEDDDH) shows a compositional bias: acidic residues. Positions 368-385 (DGQADAGEYHKDHLNETL) are enriched in basic and acidic residues.

The protein belongs to the GOLM family.

It localises to the membrane. This Xenopus laevis (African clawed frog) protein is Protein GOLM2 (golm2).